Here is a 702-residue protein sequence, read N- to C-terminus: Antigen peptide transporter 2 (702 aa).

The Lumenal portion of the chain corresponds to 1 to 6 (MALSYL). The helical transmembrane segment at 7 to 27 (RPWVSLLLADMALLGLLQGSL) threads the bilayer. Over 28-56 (GNLLPQGLPGLWIEGTLRLGVLWGLLKVG) the chain is Cytoplasmic. A helical transmembrane segment spans residues 57–77 (ELLGLVGTLLPLLCLATPLFF). Residues 78–98 (SLRALVGGTASTSVVRVASAS) are Lumenal-facing. The chain crosses the membrane as a helical span at residues 99 to 119 (WGWLLAGYGAVALSWAVWAVL). Residues 120 to 147 (SPAGVQEKEPGQENRTLMKRLLKLSRPD) are Cytoplasmic-facing. Residues 148 to 168 (LPFLIAAFFFLVVAVWGETLI) traverse the membrane as a helical segment. The ABC transmembrane type-1 domain maps to 151–434 (LIAAFFFLVV…LVYMYGDMLS (284 aa)). Over 169-186 (PRYSGRVIDILGGDFDPD) the chain is Lumenal. The helical transmembrane segment at 187-207 (AFASAIFFMCLFSVGSSFSAG) threads the bilayer. At 208–265 (CRGGSFLFTMSRINLRIREQLFSSLLRQDLGFFQETKTGELNSRLSSDTSLMSRWLPF) the chain is on the cytoplasmic side. The chain crosses the membrane as a helical span at residues 266-286 (NANILLRSLVKVVGLYFFMLQ). Residues 287–292 (VSPRLT) are Lumenal-facing. A helical transmembrane segment spans residues 293–313 (FLSLLDLPLTIAAEKVYNPRH). The segment at 300–388 (PLTIAAEKVY…RRVMALGMQV (89 aa)) is part of the peptide-binding site. At 314–373 (QAVLKEIQDAVAKAGQVVREAVGGLQTVRSFGAEEQEVSHYKEALERCRQLWWRRDLEKD) the chain is on the cytoplasmic side. A helical membrane pass occupies residues 374–394 (VYLVIRRVMALGMQVLILNCG). Residues 395 to 407 (VQQILAGEVTRGG) lie on the Lumenal side of the membrane. Residues 408 to 428 (LLSFLLYQEEVGQYVRNLVYM) traverse the membrane as a helical segment. Residues 413-432 (LYQEEVGQYVRNLVYMYGDM) form a part of the peptide-binding site region. The Cytoplasmic portion of the chain corresponds to 429 to 702 (YGDMLSNVGA…AHLVQQRLEA (274 aa)). Residues 467 to 701 (VEFQDVSFSY…YAHLVQQRLE (235 aa)) form the ABC transporter domain. Position 502-509 (502-509 (GPNGSGKS)) interacts with ATP.

Belongs to the ABC transporter superfamily. ABCB family. MHC peptide exporter (TC 3.A.1.209) subfamily. As to quaternary structure, heterodimer of TAP1 and TAP2 (TAP1-TAP2). A component of the peptide loading complex (PLC), interacts via TAPBP with MHCI heterodimer; this interaction mediates peptide-MHCI assembly. It depends on Mg(2+) as a cofactor.

Its subcellular location is the endoplasmic reticulum membrane. The enzyme catalyses a peptide antigen(in) + ATP + H2O = a peptide antigen(out) + ADP + phosphate + H(+). In terms of biological role, ABC transporter associated with antigen processing. In complex with TAP1 mediates unidirectional translocation of peptide antigens from cytosol to endoplasmic reticulum (ER) for loading onto MHC class I (MHCI) molecules. Uses the chemical energy of ATP to export peptides against the concentration gradient. During the transport cycle alternates between 'inward-facing' state with peptide binding site facing the cytosol to 'outward-facing' state with peptide binding site facing the ER lumen. Peptide antigen binding to ATP-loaded TAP1-TAP2 induces a switch to hydrolysis-competent 'outward-facing' conformation ready for peptide loading onto nascent MHCI molecules. Subsequently ATP hydrolysis resets the transporter to the 'inward facing' state for a new cycle. As a component of the peptide loading complex (PLC), acts as a molecular scaffold essential for peptide-MHCI assembly and antigen presentation. This chain is Antigen peptide transporter 2 (Tap2), found in Mus musculus (Mouse).